A 464-amino-acid polypeptide reads, in one-letter code: MAKVISQDTFDDVVKENVVEFSMTPSEAKEETIKQFEAQGINLANIIKDLSVNPQTGQPVINETVDKIKEHIGQKLEETTELLEQLATLDAECKKSLAHRVLAGKNGAHDALITLLEETLSAESPNESVLKKSLEAINSLTHKQPDLFDAEAMAVVLKLLALKVESEEVTLLTLQWLQKACIMHEMNRQNIMNTSALKLMKPLLGKGKDRLVRELTAVFRFLVLDDDIRVEFGCAHEHARQIAGEVLITLVELLPAYQDPNVLADLLLTIGTLAVRQELCTAIDEAGGLKSVFEIMSSNLDEVRLNREALKLLRALAGQDSVKSHIVQQGVAPIIKQLLETHQSNENIVAAALACVTTLTLRVQEHSAAFFDTGIAEVIVEALRAHPKHKIVQRNGAWAIRNMVSRSRNQCETWISFGVEDLLNMAMKEHPSVEQDIKAALRDLGCSVHLREEWTGTAEKKIAA.

Threonine 9 carries the phosphothreonine modification. ARM repeat units lie at residues 235–275, 287–331, 332–374, and 375–418; these read AHEH…TLAV, GGLK…QQGV, APII…FDTG, and IAEV…ISFG.

It belongs to the ARMC6 family.

This chain is Armadillo repeat-containing protein 6 homolog, found in Drosophila melanogaster (Fruit fly).